The chain runs to 335 residues: Phosphate acyltransferase (335 aa).

Belongs to the PlsX family. In terms of assembly, homodimer. Probably interacts with PlsY.

The protein localises to the cytoplasm. It carries out the reaction a fatty acyl-[ACP] + phosphate = an acyl phosphate + holo-[ACP]. The protein operates within lipid metabolism; phospholipid metabolism. Its function is as follows. Catalyzes the reversible formation of acyl-phosphate (acyl-PO(4)) from acyl-[acyl-carrier-protein] (acyl-ACP). This enzyme utilizes acyl-ACP as fatty acyl donor, but not acyl-CoA. The polypeptide is Phosphate acyltransferase (Streptococcus pyogenes serotype M6 (strain ATCC BAA-946 / MGAS10394)).